The primary structure comprises 456 residues: Bifunctional protein GlmU (456 aa).

Positions 1–229 are pyrophosphorylase; that stretch reads MSNSAMSVVI…LSEVEGVNNR (229 aa). UDP-N-acetyl-alpha-D-glucosamine is bound by residues 11 to 14, Lys25, Gln76, 81 to 82, 103 to 105, Gly140, Glu154, Asn169, and Asn227; these read LAAG, GT, and YGD. Position 105 (Asp105) interacts with Mg(2+). A Mg(2+)-binding site is contributed by Asn227. Residues 230 to 250 are linker; it reads LQLARLERVYQAEQAEKLLLA. Residues 251–456 are N-acetyltransferase; the sequence is GVMLRDPARF…QGWQRPVKKK (206 aa). Arg333 and Lys351 together coordinate UDP-N-acetyl-alpha-D-glucosamine. His363 functions as the Proton acceptor in the catalytic mechanism. The UDP-N-acetyl-alpha-D-glucosamine site is built by Tyr366 and Asn377. Residues Ala380, 386 to 387, Ser405, Ala423, and Arg440 contribute to the acetyl-CoA site; that span reads NY.

In the N-terminal section; belongs to the N-acetylglucosamine-1-phosphate uridyltransferase family. It in the C-terminal section; belongs to the transferase hexapeptide repeat family. As to quaternary structure, homotrimer. The cofactor is Mg(2+).

The protein resides in the cytoplasm. It catalyses the reaction alpha-D-glucosamine 1-phosphate + acetyl-CoA = N-acetyl-alpha-D-glucosamine 1-phosphate + CoA + H(+). The enzyme catalyses N-acetyl-alpha-D-glucosamine 1-phosphate + UTP + H(+) = UDP-N-acetyl-alpha-D-glucosamine + diphosphate. It participates in nucleotide-sugar biosynthesis; UDP-N-acetyl-alpha-D-glucosamine biosynthesis; N-acetyl-alpha-D-glucosamine 1-phosphate from alpha-D-glucosamine 6-phosphate (route II): step 2/2. Its pathway is nucleotide-sugar biosynthesis; UDP-N-acetyl-alpha-D-glucosamine biosynthesis; UDP-N-acetyl-alpha-D-glucosamine from N-acetyl-alpha-D-glucosamine 1-phosphate: step 1/1. The protein operates within bacterial outer membrane biogenesis; LPS lipid A biosynthesis. Its function is as follows. Catalyzes the last two sequential reactions in the de novo biosynthetic pathway for UDP-N-acetylglucosamine (UDP-GlcNAc). The C-terminal domain catalyzes the transfer of acetyl group from acetyl coenzyme A to glucosamine-1-phosphate (GlcN-1-P) to produce N-acetylglucosamine-1-phosphate (GlcNAc-1-P), which is converted into UDP-GlcNAc by the transfer of uridine 5-monophosphate (from uridine 5-triphosphate), a reaction catalyzed by the N-terminal domain. The sequence is that of Bifunctional protein GlmU from Klebsiella pneumoniae subsp. pneumoniae (strain ATCC 700721 / MGH 78578).